The primary structure comprises 232 residues: Flagellar L-ring protein (232 aa).

Positions 1-21 (MQKYALHAYPVMALMVATLTG) are cleaved as a signal peptide. C22 carries N-palmitoyl cysteine lipidation. C22 carries the S-diacylglycerol cysteine lipid modification.

This sequence belongs to the FlgH family. The basal body constitutes a major portion of the flagellar organelle and consists of four rings (L,P,S, and M) mounted on a central rod.

It localises to the cell outer membrane. The protein localises to the bacterial flagellum basal body. Assembles around the rod to form the L-ring and probably protects the motor/basal body from shearing forces during rotation. This is Flagellar L-ring protein from Salmonella gallinarum (strain 287/91 / NCTC 13346).